The following is a 169-amino-acid chain: Large ribosomal subunit protein bL19m (169 aa).

The N-terminal 16 residues, 1–16 (MWSRNVRLLGSWTRSY), are a transit peptide targeting the mitochondrion.

It belongs to the bacterial ribosomal protein bL19 family. As to quaternary structure, component of the mitochondrial large ribosomal subunit (mt-LSU). Mature yeast 74S mitochondrial ribosomes consist of a small (37S) and a large (54S) subunit. The 37S small subunit contains a 15S ribosomal RNA (15S mt-rRNA) and 34 different proteins. The 54S large subunit contains a 21S rRNA (21S mt-rRNA) and 46 different proteins.

The protein localises to the mitochondrion. Its function is as follows. Component of the mitochondrial ribosome (mitoribosome), a dedicated translation machinery responsible for the synthesis of mitochondrial genome-encoded proteins, including at least some of the essential transmembrane subunits of the mitochondrial respiratory chain. The mitoribosomes are attached to the mitochondrial inner membrane and translation products are cotranslationally integrated into the membrane. bL19m is essential for respiration. The chain is Large ribosomal subunit protein bL19m (IMG1) from Saccharomyces cerevisiae (strain ATCC 204508 / S288c) (Baker's yeast).